The chain runs to 43 residues: Hemolysin H1U (43 aa).

Met1 carries the N-formylmethionine modification.

The protein belongs to the staphylococcal hemolytic protein family.

The protein resides in the secreted. Functionally, virulence factor. Causes hemolysis of erythrocytes. Acts synergistically with beta-hemolysins from S.aureus ATCC 25923. Cytotoxic towards human dermal fibroblasts. The sequence is that of Hemolysin H1U from Staphylococcus ureilyticus (Staphylococcus cohnii subsp. urealyticus).